The following is a 215-amino-acid chain: Probable septum site-determining protein MinC (215 aa).

The protein belongs to the MinC family. Interacts with MinD and FtsZ.

Cell division inhibitor that blocks the formation of polar Z ring septums. Rapidly oscillates between the poles of the cell to destabilize FtsZ filaments that have formed before they mature into polar Z rings. Prevents FtsZ polymerization. This Clostridium botulinum (strain Alaska E43 / Type E3) protein is Probable septum site-determining protein MinC.